The chain runs to 2156 residues: Oxygen-regulated protein 1 (2156 aa).

Polar residues predominate over residues 1-19; that stretch reads MSDTPSTGFSIIHPTSSEG. The interval 1-25 is disordered; sequence MSDTPSTGFSIIHPTSSEGQVPPPR. Doublecortin domains lie at 36–118 and 154–233; these read KRIS…VDLD and RSLV…GNYD. Disordered stretches follow at residues 353–375, 666–686, 1438–1458, and 1590–1621; these read VSKT…RTES, SSVA…SRYQ, DMEE…MTSS, and DWSD…TQEK.

In terms of assembly, interacts (via the doublecortin domains) with microtubules. Interacts with RP1L1. Interacts with MAK. As to expression, expressed in retina. Not expressed in heart, brain, placenta, lung, liver, skeletal muscle, kidney, spleen and pancreas.

Its subcellular location is the cytoplasm. The protein resides in the cytoskeleton. It localises to the cilium axoneme. The protein localises to the cell projection. It is found in the cilium. Its subcellular location is the photoreceptor outer segment. In terms of biological role, microtubule-associated protein regulating the stability and length of the microtubule-based axoneme of photoreceptors. Required for the differentiation of photoreceptor cells, it plays a role in the organization of the outer segment of rod and cone photoreceptors ensuring the correct orientation and higher-order stacking of outer segment disks along the photoreceptor axoneme. The chain is Oxygen-regulated protein 1 (RP1) from Homo sapiens (Human).